The primary structure comprises 294 residues: tRNA pseudouridine synthase B (294 aa).

Residue Asp-39 is the Nucleophile of the active site.

It belongs to the pseudouridine synthase TruB family. Type 1 subfamily.

It catalyses the reaction uridine(55) in tRNA = pseudouridine(55) in tRNA. Its function is as follows. Responsible for synthesis of pseudouridine from uracil-55 in the psi GC loop of transfer RNAs. The protein is tRNA pseudouridine synthase B of Streptococcus pyogenes serotype M6 (strain ATCC BAA-946 / MGAS10394).